Consider the following 306-residue polypeptide: Porphobilinogen deaminase (306 aa).

Cys239 bears the S-(dipyrrolylmethanemethyl)cysteine mark.

The protein belongs to the HMBS family. As to quaternary structure, monomer. It depends on dipyrromethane as a cofactor.

The catalysed reaction is 4 porphobilinogen + H2O = hydroxymethylbilane + 4 NH4(+). It functions in the pathway porphyrin-containing compound metabolism; protoporphyrin-IX biosynthesis; coproporphyrinogen-III from 5-aminolevulinate: step 2/4. Tetrapolymerization of the monopyrrole PBG into the hydroxymethylbilane pre-uroporphyrinogen in several discrete steps. This chain is Porphobilinogen deaminase, found in Helicobacter pylori (strain G27).